Consider the following 157-residue polypeptide: Small ribosomal subunit protein uS7 (157 aa).

The protein belongs to the universal ribosomal protein uS7 family. Part of the 30S ribosomal subunit. Contacts proteins S9 and S11.

One of the primary rRNA binding proteins, it binds directly to 16S rRNA where it nucleates assembly of the head domain of the 30S subunit. Is located at the subunit interface close to the decoding center, probably blocks exit of the E-site tRNA. This chain is Small ribosomal subunit protein uS7, found in Phenylobacterium zucineum (strain HLK1).